The primary structure comprises 412 residues: Na(+)/H(+) antiporter NhaA 1 (412 aa).

10 helical membrane passes run 34–54 (VGGMVLLAAAALALVLANSPA), 75–95 (LTIGEWAKDGLLAIFFFVAGL), 114–134 (LPVVAALGGMVVPAVLAFAIG), 142–162 (AAWAIPVATDIAFALGVLSLT), 183–203 (LGAIVVIAVLFTSGLSVLALL), 234–254 (WIAVHSSGIHATIAGVALGLL), 282–302 (LIVPVFALFAAGVPVDGEALV), 309–329 (VAIAVVVGLVVGKLVGIFGSS), 349–369 (LSALAMLGGVGFTVSLLIAEL), and 379–399 (AKAAVLIASALASLLAAVMLL).

It belongs to the NhaA Na(+)/H(+) (TC 2.A.33) antiporter family.

It localises to the cell membrane. It carries out the reaction Na(+)(in) + 2 H(+)(out) = Na(+)(out) + 2 H(+)(in). Functionally, na(+)/H(+) antiporter that extrudes sodium in exchange for external protons. The polypeptide is Na(+)/H(+) antiporter NhaA 1 (Saccharopolyspora erythraea (strain ATCC 11635 / DSM 40517 / JCM 4748 / NBRC 13426 / NCIMB 8594 / NRRL 2338)).